Here is a 243-residue protein sequence, read N- to C-terminus: Transcription factor A, mitochondrial (243 aa).

Residues 1-42 constitute a mitochondrion transit peptide; it reads MALFRGMWSVLKALGRTGVEMCAGCGGRIPSSISLVCIPKCF. Positions 49 to 117 form a DNA-binding region, HMG box 1; the sequence is PKKPMSSYLR…AYKEAVSKYK (69 aa). Phosphoserine; by PKA occurs at positions 54, 55, and 60. Residue Lys66 is modified to N6-succinyllysine. Phosphothreonine is present on Thr121. The segment at residues 154–218 is a DNA-binding region (HMG box 2); the sequence is PKRPRSAYNI…RYDNEMKSWE (65 aa). Ser159 is subject to Phosphoserine; by PKA. Residue Ser192 is modified to Phosphoserine.

As to quaternary structure, monomer; binds DNA as a monomer. Homodimer. Component of the mitochondrial transcription initiation complex, composed at least of TFB2M, TFAM and POLRMT. In this complex TFAM recruits POLRMT to the promoter whereas TFB2M induces structural changes in POLRMT to enable promoter opening and trapping of the DNA non-template strand. Upon metabolic stress, forms a complex composed of FOXO3, SIRT3, TFAM and POLRMT. Interacts with TFB1M and TFB2M. Interacts with CLPX; this enhances DNA-binding. Phosphorylation by PKA within the HMG box 1 impairs DNA binding and promotes degradation by the AAA+ Lon protease. The mitochondrial isoform is widely expressed while the nuclear isoform is testis-specific.

It is found in the mitochondrion. It localises to the mitochondrion matrix. The protein resides in the mitochondrion nucleoid. Its subcellular location is the nucleus. Its function is as follows. Binds to the mitochondrial light strand promoter and functions in mitochondrial transcription regulation. Component of the mitochondrial transcription initiation complex, composed at least of TFB2M, TFAM and POLRMT that is required for basal transcription of mitochondrial DNA. In this complex, TFAM recruits POLRMT to a specific promoter whereas TFB2M induces structural changes in POLRMT to enable promoter opening and trapping of the DNA non-template strand. Required for accurate and efficient promoter recognition by the mitochondrial RNA polymerase. Promotes transcription initiation from the HSP1 and the light strand promoter by binding immediately upstream of transcriptional start sites. Is able to unwind DNA. Bends the mitochondrial light strand promoter DNA into a U-turn shape via its HMG boxes. Required for maintenance of normal levels of mitochondrial DNA. May play a role in organizing and compacting mitochondrial DNA. In terms of biological role, may also function as a transcriptional activator or may have a structural role in the compaction of nuclear DNA during spermatogenesis. The polypeptide is Transcription factor A, mitochondrial (Mus musculus (Mouse)).